A 615-amino-acid polypeptide reads, in one-letter code: Dihydroxy-acid dehydratase (615 aa).

A Mg(2+)-binding site is contributed by Asp83. Cys124 serves as a coordination point for [2Fe-2S] cluster. 2 residues coordinate Mg(2+): Asp125 and Lys126. Lys126 carries the N6-carboxylysine modification. Residue Cys199 coordinates [2Fe-2S] cluster. Position 495 (Glu495) interacts with Mg(2+). Ser521 serves as the catalytic Proton acceptor.

This sequence belongs to the IlvD/Edd family. Homodimer. [2Fe-2S] cluster is required as a cofactor. Requires Mg(2+) as cofactor.

The enzyme catalyses (2R)-2,3-dihydroxy-3-methylbutanoate = 3-methyl-2-oxobutanoate + H2O. It carries out the reaction (2R,3R)-2,3-dihydroxy-3-methylpentanoate = (S)-3-methyl-2-oxopentanoate + H2O. It functions in the pathway amino-acid biosynthesis; L-isoleucine biosynthesis; L-isoleucine from 2-oxobutanoate: step 3/4. The protein operates within amino-acid biosynthesis; L-valine biosynthesis; L-valine from pyruvate: step 3/4. Its function is as follows. Functions in the biosynthesis of branched-chain amino acids. Catalyzes the dehydration of (2R,3R)-2,3-dihydroxy-3-methylpentanoate (2,3-dihydroxy-3-methylvalerate) into 2-oxo-3-methylpentanoate (2-oxo-3-methylvalerate) and of (2R)-2,3-dihydroxy-3-methylbutanoate (2,3-dihydroxyisovalerate) into 2-oxo-3-methylbutanoate (2-oxoisovalerate), the penultimate precursor to L-isoleucine and L-valine, respectively. The protein is Dihydroxy-acid dehydratase of Corynebacterium jeikeium (strain K411).